Here is a 255-residue protein sequence, read N- to C-terminus: Thiazole synthase (255 aa).

The active-site Schiff-base intermediate with DXP is the K96. 1-deoxy-D-xylulose 5-phosphate is bound by residues G157, 183–184 (AG), and 205–206 (NT).

It belongs to the ThiG family. Homotetramer. Forms heterodimers with either ThiH or ThiS.

Its subcellular location is the cytoplasm. It carries out the reaction [ThiS sulfur-carrier protein]-C-terminal-Gly-aminoethanethioate + 2-iminoacetate + 1-deoxy-D-xylulose 5-phosphate = [ThiS sulfur-carrier protein]-C-terminal Gly-Gly + 2-[(2R,5Z)-2-carboxy-4-methylthiazol-5(2H)-ylidene]ethyl phosphate + 2 H2O + H(+). The protein operates within cofactor biosynthesis; thiamine diphosphate biosynthesis. Functionally, catalyzes the rearrangement of 1-deoxy-D-xylulose 5-phosphate (DXP) to produce the thiazole phosphate moiety of thiamine. Sulfur is provided by the thiocarboxylate moiety of the carrier protein ThiS. In vitro, sulfur can be provided by H(2)S. The polypeptide is Thiazole synthase (Geobacillus sp. (strain WCH70)).